The chain runs to 98 residues: Large ribosomal subunit protein uL23 (98 aa).

The protein belongs to the universal ribosomal protein uL23 family. As to quaternary structure, part of the 50S ribosomal subunit. Contacts protein L29, and trigger factor when it is bound to the ribosome.

Its function is as follows. One of the early assembly proteins it binds 23S rRNA. One of the proteins that surrounds the polypeptide exit tunnel on the outside of the ribosome. Forms the main docking site for trigger factor binding to the ribosome. In Cereibacter sphaeroides (strain ATCC 17029 / ATH 2.4.9) (Rhodobacter sphaeroides), this protein is Large ribosomal subunit protein uL23.